Here is a 148-residue protein sequence, read N- to C-terminus: Cytochrome c oxidase subunit 6, mitochondrial (148 aa).

The transit peptide at 1–40 directs the protein to the mitochondrion; sequence MLSRAIFRNPVINRTLLRARPGAYHATRLTKNTFIQSRKY.

The protein belongs to the cytochrome c oxidase subunit 5A family. Component of the cytochrome c oxidase (complex IV, CIV), a multisubunit enzyme composed of 12 subunits. The complex is composed of a catalytic core of 3 subunits COX1, COX2 and COX3, encoded in the mitochondrial DNA, and 9 supernumerary subunits COX4, COX5A (or COX5B), COX6, COX7, COX8, COX9, COX12, COX13 and COX26, which are encoded in the nuclear genome. The complex exists as a monomer or a dimer and forms supercomplexes (SCs) in the inner mitochondrial membrane with a dimer of ubiquinol-cytochrome c oxidoreductase (cytochrome b-c1 complex, complex III, CIII), resulting in 2 different assemblies (supercomplexes III(2)IV and III(2)IV(2)). COX26 interacts with COX1, COX2, COX6 and COX9.

It localises to the mitochondrion inner membrane. Its pathway is energy metabolism; oxidative phosphorylation. Its function is as follows. Component of the cytochrome c oxidase, the last enzyme in the mitochondrial electron transport chain which drives oxidative phosphorylation. The respiratory chain contains 3 multisubunit complexes succinate dehydrogenase (complex II, CII), ubiquinol-cytochrome c oxidoreductase (cytochrome b-c1 complex, complex III, CIII) and cytochrome c oxidase (complex IV, CIV), that cooperate to transfer electrons derived from NADH and succinate to molecular oxygen, creating an electrochemical gradient over the inner membrane that drives transmembrane transport and the ATP synthase. Cytochrome c oxidase is the component of the respiratory chain that catalyzes the reduction of oxygen to water. Electrons originating from reduced cytochrome c in the intermembrane space (IMS) are transferred via the dinuclear copper A center (CU(A)) of COX2 and heme A of COX1 to the active site in COX1, a binuclear center (BNC) formed by heme A3 and copper B (CU(B)). The BNC reduces molecular oxygen to 2 water molecules using 4 electrons from cytochrome c in the IMS and 4 protons from the mitochondrial matrix. COX6 may stabilize the region of CIV at the interface with CIII, supporting a role in formation or stability of the CIII(2)IV(2) SC. The chain is Cytochrome c oxidase subunit 6, mitochondrial (COX6) from Saccharomyces cerevisiae (strain ATCC 204508 / S288c) (Baker's yeast).